Consider the following 307-residue polypeptide: B3 domain-containing protein At5g18000 (307 aa).

A DNA-binding region (TF-B3 1) is located at residues 20-115 (FFKILRREDH…CFNVTIFEAD (96 aa)). Disordered stretches follow at residues 122-141 (PRKT…RKSI) and 151-209 (IESW…SEAG). Residues 166-177 (ESTSGRLTQKQE) show a composition bias toward polar residues. Basic and acidic residues predominate over residues 178-192 (LNLRKKEADKTEKSK). Positions 214–307 (IPEFKLTIKK…TEMRVKVSKE (94 aa)) form a DNA-binding region, TF-B3 2.

Its subcellular location is the nucleus. The polypeptide is B3 domain-containing protein At5g18000 (Arabidopsis thaliana (Mouse-ear cress)).